The chain runs to 373 residues: Polygalacturonase (373 aa).

The signal sequence occupies residues 1-24 (MVRNIVSRLCSQLFALPSSSLQER). An intrachain disulfide couples cysteine 27 to cysteine 42. Asparagine 65 and asparagine 94 each carry an N-linked (GlcNAc...) asparagine glycan. PbH1 repeat units follow at residues 136–158 (TGNS…DITG), 159–197 (SSQL…DISS), 198–219 (SDHV…AVTS), 220–240 (GTNI…SIGS), 249–270 (VDGV…RIKS), 278–300 (INNV…DVQQ), 312–333 (TNGV…ASSA), and 345–369 (CSGF…YPTN). Aspartate 212 acts as the Proton donor in catalysis. Cysteine 214 and cysteine 230 are oxidised to a cystine. Residue histidine 234 is part of the active site. 2 N-linked (GlcNAc...) asparagine glycosylation sites follow: asparagine 280 and asparagine 290. 2 cysteine pairs are disulfide-bonded: cysteine 340/cysteine 345 and cysteine 364/cysteine 371.

Belongs to the glycosyl hydrolase 28 family.

It is found in the secreted. The catalysed reaction is (1,4-alpha-D-galacturonosyl)n+m + H2O = (1,4-alpha-D-galacturonosyl)n + (1,4-alpha-D-galacturonosyl)m.. Functionally, involved in maceration and soft-rotting of plant tissue. Hydrolyzes the 1,4-alpha glycosidic bonds of de-esterified pectate in the smooth region of the plant cell wall. The sequence is that of Polygalacturonase (PGA) from Fusarium fujikuroi (Bakanae and foot rot disease fungus).